Here is a 291-residue protein sequence, read N- to C-terminus: Bifunctional protein FolD (291 aa).

NADP(+) is bound by residues 173–175 and Ser-198; that span reads GRS.

This sequence belongs to the tetrahydrofolate dehydrogenase/cyclohydrolase family. As to quaternary structure, homodimer.

It catalyses the reaction (6R)-5,10-methylene-5,6,7,8-tetrahydrofolate + NADP(+) = (6R)-5,10-methenyltetrahydrofolate + NADPH. It carries out the reaction (6R)-5,10-methenyltetrahydrofolate + H2O = (6R)-10-formyltetrahydrofolate + H(+). It participates in one-carbon metabolism; tetrahydrofolate interconversion. Its function is as follows. Catalyzes the oxidation of 5,10-methylenetetrahydrofolate to 5,10-methenyltetrahydrofolate and then the hydrolysis of 5,10-methenyltetrahydrofolate to 10-formyltetrahydrofolate. The protein is Bifunctional protein FolD of Psychrobacter sp. (strain PRwf-1).